Reading from the N-terminus, the 463-residue chain is HEPACAM family member 2 (463 aa).

Residues Met-1 to Gly-32 form the signal peptide. Residues Asn-86, Asn-130, and Asn-166 are each glycosylated (N-linked (GlcNAc...) asparagine). Ig-like C2-type domains lie at Pro-150–Ile-234 and Pro-236–Thr-332. 2 disulfide bridges follow: Cys-171/Cys-220 and Cys-271/Cys-316. Asn-321 carries an N-linked (GlcNAc...) asparagine glycan. Residues Leu-353–Trp-373 form a helical membrane-spanning segment. Residues Lys-374–Glu-463 are Cytoplasmic-facing.

Post-translationally, poly-ADP-ribosylated (PARsylated) by tankyrase TNKS during late G2 and prophase, leading to translocation to mitotic centrosomes. In terms of processing, N-glycosylated.

The protein localises to the golgi apparatus membrane. It is found in the cytoplasm. It localises to the cytoskeleton. Its subcellular location is the spindle. The protein resides in the microtubule organizing center. The protein localises to the centrosome. It is found in the midbody. Its function is as follows. Required during prometaphase for centrosome maturation. Following poly-ADP-ribosylation (PARsylation) by TNKS, translocates from the Golgi apparatus to mitotic centrosomes and plays a key role in the formation of robust microtubules for prompt movement of chromosomes: anchors AKAP9/CG-NAP, a scaffold protein of the gamma-tubulin ring complex and promotes centrosome maturation. This Mus musculus (Mouse) protein is HEPACAM family member 2 (Hepacam2).